We begin with the raw amino-acid sequence, 457 residues long: Probable ubiquitin carboxyl-terminal hydrolase 16 (457 aa).

The disordered stretch occupies residues 34 to 97 (VSSPSVPEGT…DGANDFVDED (64 aa)). The segment covering 45–67 (TVLNNPKQSTVSRKSFSAPTSPT) has biased composition (polar residues). Serine 61 carries the phosphoserine modification. Residue threonine 64 is modified to Phosphothreonine. Serine 65 bears the Phosphoserine mark. In terms of domain architecture, USP spans 125–429 (PGLVNLGNTC…QAYILQYKRK (305 aa)). Catalysis depends on cysteine 134, which acts as the Nucleophile. Histidine 388 (proton acceptor) is an active-site residue. The segment at 434–457 (SKHKLNTENTVTKTSNKKRRKISF) is disordered. Residues 448 to 457 (SNKKRRKISF) show a composition bias toward basic residues.

Belongs to the peptidase C19 family.

The enzyme catalyses Thiol-dependent hydrolysis of ester, thioester, amide, peptide and isopeptide bonds formed by the C-terminal Gly of ubiquitin (a 76-residue protein attached to proteins as an intracellular targeting signal).. The protein is Probable ubiquitin carboxyl-terminal hydrolase 16 (ubp16) of Schizosaccharomyces pombe (strain 972 / ATCC 24843) (Fission yeast).